A 148-amino-acid polypeptide reads, in one-letter code: Deoxyuridine 5'-triphosphate nucleotidohydrolase (148 aa).

Residues 67–69 (RSG), Asn-80, 84–86 (LID), and Met-94 contribute to the substrate site.

This sequence belongs to the dUTPase family. The cofactor is Mg(2+).

The enzyme catalyses dUTP + H2O = dUMP + diphosphate + H(+). The protein operates within pyrimidine metabolism; dUMP biosynthesis; dUMP from dCTP (dUTP route): step 2/2. In terms of biological role, this enzyme is involved in nucleotide metabolism: it produces dUMP, the immediate precursor of thymidine nucleotides and it decreases the intracellular concentration of dUTP so that uracil cannot be incorporated into DNA. In Francisella tularensis subsp. holarctica (strain FTNF002-00 / FTA), this protein is Deoxyuridine 5'-triphosphate nucleotidohydrolase.